The following is a 338-amino-acid chain: Ketol-acid reductoisomerase (NADP(+)) (338 aa).

The KARI N-terminal Rossmann domain occupies 1 to 181; sequence MKVFYDKDAD…GGGRAGIIET (181 aa). Residues 24 to 27, Arg-47, and Ser-52 contribute to the NADP(+) site; that span reads YGSQ. The active site involves His-107. Gly-133 is a binding site for NADP(+). The KARI C-terminal knotted domain maps to 182–327; the sequence is NFREETETDL…AKLRAMMPWI (146 aa). Residues Asp-190, Glu-194, Glu-226, and Glu-230 each contribute to the Mg(2+) site. Ser-251 contributes to the substrate binding site.

The protein belongs to the ketol-acid reductoisomerase family. It depends on Mg(2+) as a cofactor.

The enzyme catalyses (2R)-2,3-dihydroxy-3-methylbutanoate + NADP(+) = (2S)-2-acetolactate + NADPH + H(+). It catalyses the reaction (2R,3R)-2,3-dihydroxy-3-methylpentanoate + NADP(+) = (S)-2-ethyl-2-hydroxy-3-oxobutanoate + NADPH + H(+). The protein operates within amino-acid biosynthesis; L-isoleucine biosynthesis; L-isoleucine from 2-oxobutanoate: step 2/4. It participates in amino-acid biosynthesis; L-valine biosynthesis; L-valine from pyruvate: step 2/4. Involved in the biosynthesis of branched-chain amino acids (BCAA). Catalyzes an alkyl-migration followed by a ketol-acid reduction of (S)-2-acetolactate (S2AL) to yield (R)-2,3-dihydroxy-isovalerate. In the isomerase reaction, S2AL is rearranged via a Mg-dependent methyl migration to produce 3-hydroxy-3-methyl-2-ketobutyrate (HMKB). In the reductase reaction, this 2-ketoacid undergoes a metal-dependent reduction by NADPH to yield (R)-2,3-dihydroxy-isovalerate. The protein is Ketol-acid reductoisomerase (NADP(+)) of Cupriavidus necator (strain ATCC 17699 / DSM 428 / KCTC 22496 / NCIMB 10442 / H16 / Stanier 337) (Ralstonia eutropha).